We begin with the raw amino-acid sequence, 89 residues long: Small ribosomal subunit protein uS14 (89 aa).

It belongs to the universal ribosomal protein uS14 family. In terms of assembly, part of the 30S ribosomal subunit. Contacts proteins S3 and S10.

In terms of biological role, binds 16S rRNA, required for the assembly of 30S particles and may also be responsible for determining the conformation of the 16S rRNA at the A site. In Flavobacterium johnsoniae (strain ATCC 17061 / DSM 2064 / JCM 8514 / BCRC 14874 / CCUG 350202 / NBRC 14942 / NCIMB 11054 / UW101) (Cytophaga johnsonae), this protein is Small ribosomal subunit protein uS14.